A 203-amino-acid chain; its full sequence is 3-isopropylmalate dehydratase small subunit (203 aa).

This sequence belongs to the LeuD family. LeuD type 1 subfamily. In terms of assembly, heterodimer of LeuC and LeuD.

It catalyses the reaction (2R,3S)-3-isopropylmalate = (2S)-2-isopropylmalate. It participates in amino-acid biosynthesis; L-leucine biosynthesis; L-leucine from 3-methyl-2-oxobutanoate: step 2/4. In terms of biological role, catalyzes the isomerization between 2-isopropylmalate and 3-isopropylmalate, via the formation of 2-isopropylmaleate. The protein is 3-isopropylmalate dehydratase small subunit of Pelagibacter ubique (strain HTCC1062).